The sequence spans 171 residues: UPF0398 protein M28_Spy1394 (171 aa).

This sequence belongs to the UPF0398 family.

The chain is UPF0398 protein M28_Spy1394 from Streptococcus pyogenes serotype M28 (strain MGAS6180).